A 306-amino-acid polypeptide reads, in one-letter code: Ribosomal RNA small subunit methyltransferase H (306 aa).

S-adenosyl-L-methionine is bound by residues G33–Y35, D51, F78, D96, and Q103.

This sequence belongs to the methyltransferase superfamily. RsmH family.

Its subcellular location is the cytoplasm. It carries out the reaction cytidine(1402) in 16S rRNA + S-adenosyl-L-methionine = N(4)-methylcytidine(1402) in 16S rRNA + S-adenosyl-L-homocysteine + H(+). Functionally, specifically methylates the N4 position of cytidine in position 1402 (C1402) of 16S rRNA. The chain is Ribosomal RNA small subunit methyltransferase H from Rickettsia prowazekii (strain Madrid E).